Consider the following 456-residue polypeptide: RuvB-like 1 (456 aa).

A Glycyl lysine isopeptide (Lys-Gly) (interchain with G-Cter in SUMO2) cross-link involves residue K2. 70–77 (GPPGTGKT) contributes to the ATP binding site. Residue K225 forms a Glycyl lysine isopeptide (Lys-Gly) (interchain with G-Cter in SUMO1); alternate linkage. K225 is covalently cross-linked (Glycyl lysine isopeptide (Lys-Gly) (interchain with G-Cter in SUMO2); alternate). K445 is covalently cross-linked (Glycyl lysine isopeptide (Lys-Gly) (interchain with G-Cter in SUMO2)). K453 carries the post-translational modification N6-acetyllysine.

It belongs to the RuvB family. In terms of assembly, forms homohexameric rings. Can form a dodecamer with RUVBL2 made of two stacked hexameric rings; however, even though RUVBL1 and RUVBL2 are present in equimolar ratio, the oligomeric status of each hexamer is not known. Oligomerization may regulate binding to nucleic acids and conversely, binding to nucleic acids may affect the dodecameric assembly. Interaction of the complex with DHX34 results in conformational changes of the N-terminus of the RUVBL2 subunits, resulting in loss of nucleotide binding ability and ATP hydrolysis of the complex. Interacts with the transcriptional activation domain of MYC. Component of the RNA polymerase II holoenzyme complex. May also act to bridge the LEF1/TCF1-CTNNB1 complex and TBP. Component of the NuA4 histone acetyltransferase complex which contains the catalytic subunit KAT5/TIP60 and the subunits EP400, TRRAP/PAF400, BRD8/SMAP, EPC1, DMAP1/DNMAP1, RUVBL1/TIP49, RUVBL2, ING3, actin, ACTL6A/BAF53A, MORF4L1/MRG15, MORF4L2/MRGX, MRGBP, YEATS4/GAS41, VPS72/YL1 and MEAF6. The NuA4 complex interacts with MYC and the adenovirus E1A protein. RUVBL1 interacts with EP400. Component of a NuA4-related complex which contains EP400, TRRAP/PAF400, SRCAP, BRD8/SMAP, EPC1, DMAP1/DNMAP1, RUVBL1/TIP49, RUVBL2, actin, ACTL6A/BAF53A, VPS72 and YEATS4/GAS41. Component of the BAF53 complex, at least composed of ACTL6A/BAF53A, RUVBL1/TIP49, SMARCA2/BRM, and TRRAP/PAF400. Component of some MLL1/MLL complex, at least composed of the core components KMT2A/MLL1, ASH2L, HCFC1/HCF1, WDR5 and RBBP5, as well as the facultative components BACC1, CHD8, E2F6, HSP70, INO80C, KANSL1, LAS1L, MAX, MCRS1, MGA, MYST1/MOF, PELP1, PHF20, PRP31, RING2, RUVB1/TIP49A, RUVB2/TIP49B, SENP3, TAF1, TAF4, TAF6, TAF7, TAF9 and TEX10. Associates with alpha and gamma tubulins, particularly during metaphase and early anaphase. Interacts with NPAT. Component of the chromatin-remodeling INO80 complex; specifically part of a complex module associated with the helicase ATP-binding and the helicase C-terminal domain of INO80. Interacts with IGHMBP2. Interacts with OFD1. Interacts with HINT1. Component of a complex with USP49 and PSMC5. Component of a SWR1-like complex. Component of the R2TP complex composed at least of RUVBL1, RUVBL2, RPAP3 and PIHD1. Component of the PAQosome complex which is responsible for the biogenesis of several protein complexes and which consists of R2TP complex members RUVBL1, RUVBL2, RPAP3 and PIH1D1, URI complex members PFDN2, PFDN6, PDRG1, UXT and URI1 as well as ASDURF, POLR2E and DNAAF10/WDR92. Interacts with PIH1D1. Interacts with ITFG1. Interacts with WAC; WAC positively regulates MTOR activity by promoting the assembly of the TTT complex composed of TELO2, TTI1 and TTI2 and the RUVBL complex composed of RUVBL1 and RUVBL2 into the TTT-RUVBL complex which leads to the dimerization of the mTORC1 complex and its subsequent activation. The RUVBL1/RUVBL2 complex interacts with ZNHIT1 (via HIT-type zinc finger), ZNHIT3 (via HIT-type zinc finger), ZNHIT6 (via HIT-type zinc finger) and DDX59/ZNHIT5 (via HIT-type zinc finger) in the presence of ADP. Interacts with NOPCHAP1; the interaction is direct and disrupted upon ATP binding. Interacts with SMG1. Interacts with NOP2, NOP56 and NUFIP1.

It is found in the nucleus matrix. Its subcellular location is the nucleus. The protein localises to the nucleoplasm. The protein resides in the cytoplasm. It localises to the membrane. It is found in the cytoskeleton. Its subcellular location is the microtubule organizing center. The protein localises to the centrosome. The protein resides in the dynein axonemal particle. The enzyme catalyses ATP + H2O = ADP + phosphate + H(+). Possesses single-stranded DNA-stimulated ATPase and ATP-dependent DNA helicase (3' to 5') activity; hexamerization is thought to be critical for ATP hydrolysis and adjacent subunits in the ring-like structure contribute to the ATPase activity. Component of the NuA4 histone acetyltransferase complex which is involved in transcriptional activation of select genes principally by acetylation of nucleosomal histones H4 and H2A. This modification may both alter nucleosome-DNA interactions and promote interaction of the modified histones with other proteins which positively regulate transcription. This complex may be required for the activation of transcriptional programs associated with oncogene and proto-oncogene mediated growth induction, tumor suppressor mediated growth arrest and replicative senescence, apoptosis, and DNA repair. The NuA4 complex ATPase and helicase activities seem to be, at least in part, contributed by the association of RUVBL1 and RUVBL2 with EP400. NuA4 may also play a direct role in DNA repair when recruited to sites of DNA damage. Component of a SWR1-like complex that specifically mediates the removal of histone H2A.Z/H2AZ1 from the nucleosome. Proposed core component of the chromatin remodeling INO80 complex which exhibits DNA- and nucleosome-activated ATPase activity and catalyzes ATP-dependent nucleosome sliding. Plays an essential role in oncogenic transformation by MYC and also modulates transcriptional activation by the LEF1/TCF1-CTNNB1 complex. Essential for cell proliferation. May be able to bind plasminogen at cell surface and enhance plasminogen activation. This Mus musculus (Mouse) protein is RuvB-like 1 (Ruvbl1).